The following is a 526-amino-acid chain: Reelin domain-containing protein 1 (526 aa).

An N-terminal signal peptide occupies residues 1-23 (MRMQAALVGWACTTLCLASCSSA). One can recognise a Reelin domain in the interval 24-179 (FSHGASTVAC…SAHSDDRMEP (156 aa)). Residues 24–443 (FSHGASTVAC…PLGIQLRTPQ (420 aa)) are Extracellular-facing. Disordered stretches follow at residues 242–272 (DAETLSQPSSHTATEGSINQQPSGDSNPTLE), 294–336 (FASS…TVTQ), and 370–398 (LQTSGTSGLPAAGDQSEASRASASFLPQS). A compositionally biased stretch (polar residues) spans 245-271 (TLSQPSSHTATEGSINQQPSGDSNPTL). Residues 385-396 (SEASRASASFLP) are compositionally biased toward polar residues. The chain crosses the membrane as a helical span at residues 444 to 462 (LGILLCLSATLGMALAAGL). Residues 463–526 (RYLHTQYCHQ…PSVGSKKTVL (64 aa)) are Cytoplasmic-facing.

The protein localises to the membrane. This chain is Reelin domain-containing protein 1, found in Homo sapiens (Human).